The following is a 304-amino-acid chain: MPYMAMHGLTVALLLIFLAGGTEAFRICAFNAQRLTLSKLAKEPVMDTLVQILARCDIMVLQEVVDSSQKTVSLLLRELNRFDSSRTYSFLNSSLLGRSTYKEKYVYIYRSDKTQILNSYQYNDTNDLFAREPFVAQFALPSKILPSVVLVPLHTTPKDVEKELNALYDVFLDVSQRWQNEDVILLGDFNADCASLTKKRLNSLLLRTEAGFHWVISDGEDTTVRASTNCTYDRIVMHGQGCQTLLRAAAPFNFPRSFQLTEEEALSISDHYPVEVELSQATHNIQLFSLAILLLLSLLPSQLS.

An N-terminal signal peptide occupies residues 1-24 (MPYMAMHGLTVALLLIFLAGGTEA). N-linked (GlcNAc...) asparagine glycosylation is present at N92. Residue E103 is part of the active site. N123 carries N-linked (GlcNAc...) asparagine glycosylation. Residue H154 is part of the active site. Residues C193 and C230 are joined by a disulfide bond. Residue N229 is glycosylated (N-linked (GlcNAc...) asparagine).

This sequence belongs to the DNase I family.

It is found in the endoplasmic reticulum. The polypeptide is Deoxyribonuclease-1-like 1 (DNASE1L1) (Cricetulus griseus (Chinese hamster)).